A 541-amino-acid polypeptide reads, in one-letter code: 2-succinyl-5-enolpyruvyl-6-hydroxy-3-cyclohexene-1-carboxylate synthase (541 aa).

This sequence belongs to the TPP enzyme family. MenD subfamily. In terms of assembly, homodimer. Mg(2+) is required as a cofactor. Mn(2+) serves as cofactor. Requires thiamine diphosphate as cofactor.

It carries out the reaction isochorismate + 2-oxoglutarate + H(+) = 5-enolpyruvoyl-6-hydroxy-2-succinyl-cyclohex-3-ene-1-carboxylate + CO2. The protein operates within quinol/quinone metabolism; 1,4-dihydroxy-2-naphthoate biosynthesis; 1,4-dihydroxy-2-naphthoate from chorismate: step 2/7. It functions in the pathway quinol/quinone metabolism; menaquinone biosynthesis. In terms of biological role, catalyzes the thiamine diphosphate-dependent decarboxylation of 2-oxoglutarate and the subsequent addition of the resulting succinic semialdehyde-thiamine pyrophosphate anion to isochorismate to yield 2-succinyl-5-enolpyruvyl-6-hydroxy-3-cyclohexene-1-carboxylate (SEPHCHC). The protein is 2-succinyl-5-enolpyruvyl-6-hydroxy-3-cyclohexene-1-carboxylate synthase of Leuconostoc citreum (strain KM20).